The following is a 612-amino-acid chain: uncharacterized protein (612 aa).

Positions Cys-6–Cys-32 form a DNA-binding region, zn(2)-C6 fungal-type.

It is found in the cytoplasm. It localises to the nucleus. This is an uncharacterized protein from Schizosaccharomyces pombe (strain 972 / ATCC 24843) (Fission yeast).